We begin with the raw amino-acid sequence, 260 residues long: Small ribosomal subunit protein eS1 (260 aa).

Residues 1–18 (MAVGKNKRISKGKKGGKK) are compositionally biased toward basic residues. The segment at 1–22 (MAVGKNKRISKGKKGGKKKAAD) is disordered.

This sequence belongs to the eukaryotic ribosomal protein eS1 family. In terms of assembly, component of the small ribosomal subunit. Mature ribosomes consist of a small (40S) and a large (60S) subunit. The 40S subunit contains about 33 different proteins and 1 molecule of RNA (18S). The 60S subunit contains about 49 different proteins and 3 molecules of RNA (25S, 5.8S and 5S).

The protein resides in the cytoplasm. This Helianthus annuus (Common sunflower) protein is Small ribosomal subunit protein eS1.